A 609-amino-acid chain; its full sequence is Sodium- and chloride-dependent GABA transporter 2 (609 aa).

Positions 1-13 (MDSRASGTASNGE) are enriched in polar residues. Residues 1 to 23 (MDSRASGTASNGETKPVYPVMEK) are disordered. Over 1 to 40 (MDSRASGTASNGETKPVYPVMEKEEEEGTLERGHWNNKME) the chain is Cytoplasmic. The next 3 helical transmembrane spans lie at 41 to 61 (FVLS…FPYL), 68 to 88 (GAFF…VFLL), and 121 to 141 (IVIL…FYLF). At 142-206 (SSFTIDLPWG…GIQHLGALRW (65 aa)) the chain is on the extracellular side. A disulfide bond links Cys-153 and Cys-162. N-linked (GlcNAc...) asparagine glycans are attached at residues Asn-169 and Asn-173. The next 2 helical transmembrane spans lie at 207–227 (ELAL…WKGV) and 233–253 (VVYF…IRGV). A glycan (N-linked (GlcNAc...) asparagine) is linked at Asn-269. 7 helical membrane passes run 282–302 (AGTQ…ALGS), 319–339 (FLNS…LGFM), 366–386 (VVML…VVLL), 418–438 (VLIL…LTEG), 453–473 (GMCL…VYGA), 490–510 (PLIK…TFLF), and 528–548 (WWGD…IPAW). The Cytoplasmic segment spans residues 549–609 (SLYRLGTLKG…LRLTELESHC (61 aa)). Thr-594 is subject to Phosphothreonine. Ser-598 bears the Phosphoserine mark.

Belongs to the sodium:neurotransmitter symporter (SNF) (TC 2.A.22) family. SLC6A13 subfamily.

The protein resides in the cell membrane. It localises to the basolateral cell membrane. The catalysed reaction is 4-aminobutanoate(out) + chloride(out) + 2 Na(+)(out) = 4-aminobutanoate(in) + chloride(in) + 2 Na(+)(in). It catalyses the reaction taurine(out) + chloride(out) + 2 Na(+)(out) = taurine(in) + chloride(in) + 2 Na(+)(in). The enzyme catalyses beta-alanine(out) + chloride(out) + 2 Na(+)(out) = beta-alanine(in) + chloride(in) + 2 Na(+)(in). It carries out the reaction hypotaurine(out) + chloride(out) + 2 Na(+)(out) = hypotaurine(in) + chloride(in) + 2 Na(+)(in). In terms of biological role, mediates sodium- and chloride-dependent transport of gamma-aminobutyric acid (GABA). Can also mediate transport of beta-alanine, taurine and hypotaurine. The chain is Sodium- and chloride-dependent GABA transporter 2 (SLC6A13) from Macaca fascicularis (Crab-eating macaque).